A 1006-amino-acid chain; its full sequence is Probable sulfite reductase [NADPH] flavoprotein component (1006 aa).

The FAD-binding FR-type domain occupies 622-852 (EKVFTVHVRA…AVKTSVMKLP (231 aa)). FAD contacts are provided by residues 658-669 (YDIGEALGVYGV) and 788-798 (IKRREYSISSS).

FAD serves as cofactor. It depends on FMN as a cofactor.

It carries out the reaction hydrogen sulfide + 3 NADP(+) + 3 H2O = sulfite + 3 NADPH + 4 H(+). It functions in the pathway sulfur metabolism; hydrogen sulfide biosynthesis; hydrogen sulfide from sulfite (NADPH route): step 1/1. Functionally, this enzyme catalyzes the 6-electron reduction of sulfite to sulfide. This is one of several activities required for the biosynthesis of L-cysteine from sulfate. The chain is Probable sulfite reductase [NADPH] flavoprotein component from Schizosaccharomyces pombe (strain 972 / ATCC 24843) (Fission yeast).